A 418-amino-acid polypeptide reads, in one-letter code: Delta(14)-sterol reductase TM7SF2 (418 aa).

The next 6 membrane-spanning stretches (helical) occupy residues 13–35 (FGGPLGAAALLLLLPATMFHLLL), 62–81 (ALLLWLAWLGLQAALYLLPA), 102–124 (GFQALVLTALLVGLGMSAGLPLG), 129–148 (MLLPLAFVATLTAFIFSLFL), 255–277 (FGFMLAFGDMAWVPFTYSLQAQF), and 287–304 (LPMASVICLINATGYYIF). NADP(+)-binding positions include K311, R315, L338, W343, and 350–351 (NY). The chain crosses the membrane as a helical span at residues 355-377 (LIMALAWSLPCGVSHLLPYFYLL). NADP(+) is bound by residues D390, 394-398 (CLQKY), and Y405.

This sequence belongs to the ERG4/ERG24 family. Expressed in adult heart, brain, pancreas, lung, liver, skeletal muscle, kidney, ovary, prostate, testis and adrenal gland, but not detected in placenta, spleen, thymus, small intestine, colon (mucosal lining), or peripheral blood leukocytes.

The protein resides in the microsome membrane. Its subcellular location is the endoplasmic reticulum membrane. The catalysed reaction is 4,4-dimethyl-5alpha-cholesta-8,24-dien-3beta-ol + NADP(+) = 4,4-dimethyl-5alpha-cholesta-8,14,24-trien-3beta-ol + NADPH + H(+). The enzyme catalyses 5alpha-cholest-8,14-dien-3beta-ol + NADPH + H(+) = 5alpha-cholest-8-en-3beta-ol + NADP(+). It carries out the reaction 4,4-dimethyl-8,14-cholestadien-3beta-ol + NADPH + H(+) = 4,4-dimethyl-5alpha-cholest-8-en-3beta-ol + NADP(+). Its pathway is steroid biosynthesis; cholesterol biosynthesis. Functionally, catalyzes the reduction of the C14-unsaturated bond of lanosterol, as part of the metabolic pathway leading to cholesterol biosynthesis. In Homo sapiens (Human), this protein is Delta(14)-sterol reductase TM7SF2 (TM7SF2).